Consider the following 104-residue polypeptide: MYAIIMTGGKQYRVSEGDTLRVEKLPAEVGEKVVLDKVLAVGEGADLKVGNPYVEGAKVTASVQAQDKAPKIIVFKYKPKKNYRRKQGHRQPYTQLQIEKIEIQ.

Belongs to the bacterial ribosomal protein bL21 family. In terms of assembly, part of the 50S ribosomal subunit. Contacts protein L20.

This protein binds to 23S rRNA in the presence of protein L20. This Moorella thermoacetica (strain ATCC 39073 / JCM 9320) protein is Large ribosomal subunit protein bL21.